The following is a 270-amino-acid chain: Formamidopyrimidine-DNA glycosylase (270 aa).

The active-site Schiff-base intermediate with DNA is Pro-2. Glu-3 serves as the catalytic Proton donor. Catalysis depends on Lys-58, which acts as the Proton donor; for beta-elimination activity. DNA-binding residues include His-91, Arg-110, and Arg-151. An FPG-type zinc finger spans residues 236 to 270; sequence FVYGRGGEFCKSCGSTLREIRLGQRASVYCSRCQR. Arg-260 (proton donor; for delta-elimination activity) is an active-site residue.

Belongs to the FPG family. Monomer. The cofactor is Zn(2+).

The enzyme catalyses Hydrolysis of DNA containing ring-opened 7-methylguanine residues, releasing 2,6-diamino-4-hydroxy-5-(N-methyl)formamidopyrimidine.. It carries out the reaction 2'-deoxyribonucleotide-(2'-deoxyribose 5'-phosphate)-2'-deoxyribonucleotide-DNA = a 3'-end 2'-deoxyribonucleotide-(2,3-dehydro-2,3-deoxyribose 5'-phosphate)-DNA + a 5'-end 5'-phospho-2'-deoxyribonucleoside-DNA + H(+). Involved in base excision repair of DNA damaged by oxidation or by mutagenic agents. Acts as a DNA glycosylase that recognizes and removes damaged bases. Has a preference for oxidized purines, such as 7,8-dihydro-8-oxoguanine (8-oxoG). Has AP (apurinic/apyrimidinic) lyase activity and introduces nicks in the DNA strand. Cleaves the DNA backbone by beta-delta elimination to generate a single-strand break at the site of the removed base with both 3'- and 5'-phosphates. This Stutzerimonas stutzeri (strain A1501) (Pseudomonas stutzeri) protein is Formamidopyrimidine-DNA glycosylase.